A 444-amino-acid polypeptide reads, in one-letter code: Orexin receptor type 2 (444 aa).

Basic and acidic residues predominate over residues 1 to 10 (MSGTKLEDSP). Residues 1–30 (MSGTKLEDSPPCRNWSSAPELNETQEPFLN) are disordered. Residues 1-54 (MSGTKLEDSPPCRNWSSAPELNETQEPFLNPTDYDDEEFLRYLWREYLHPKEYE) are Extracellular-facing. N-linked (GlcNAc...) asparagine glycans are attached at residues N14 and N22. Polar residues predominate over residues 14 to 27 (NWSSAPELNETQEP). The segment at 33 to 49 (DYDDEEFLRYLWREYLH) is required for response to orexin-A. Residues 55–75 (WVLIAGYIIVFVVALVGNVLV) form a helical membrane-spanning segment. Residues 76–88 (CVAVWKNHHMRTV) lie on the Cytoplasmic side of the membrane. Residues 89 to 110 (TNYFIVNLSLADVLVTITCLPA) traverse the membrane as a helical segment. The Extracellular portion of the chain corresponds to 111–127 (TLVVDITETWFFGQSLC). A disulfide bridge connects residues C127 and C210. Residues 128–150 (KVIPYLQTVSVSVSVLTLSCIAL) form a helical membrane-spanning segment. The Cytoplasmic segment spans residues 151 to 170 (DRWYAICHPLMFKSTAKRAR). A helical membrane pass occupies residues 171–191 (NSIVIIWIVSCIIMIPQAIVM). The Extracellular segment spans residues 192–222 (ECSTMLPGLANKTTLFTVCDERWGGEIYPKM). A glycan (N-linked (GlcNAc...) asparagine) is linked at N202. The helical transmembrane segment at 223–243 (YHICFFLVTYMAPLCLMVLAY) threads the bilayer. Residues 244-304 (LQIFRKLWCR…QIRARRKTAR (61 aa)) are Cytoplasmic-facing. Residues 305–326 (MLMVVLLVFAICYLPISILNVL) form a helical membrane-spanning segment. Residues 327 to 342 (KRVFGMFTHTEDRETV) lie on the Extracellular side of the membrane. Residues 343 to 366 (YAWFTFSHWLVYANSAANPIIYNF) form a helical membrane-spanning segment. Residues 367–444 (LSGKFREEFK…ANGAGPLQNW (78 aa)) lie on the Cytoplasmic side of the membrane.

The protein belongs to the G-protein coupled receptor 1 family.

It is found in the cell membrane. Its function is as follows. Nonselective, high-affinity receptor for both orexin-A and orexin-B neuropeptides. Triggers an increase in cytoplasmic Ca(2+) levels in response to orexin-A binding. This is Orexin receptor type 2 (HCRTR2) from Canis lupus familiaris (Dog).